Consider the following 373-residue polypeptide: COP9 signalosome complex subunit 5 (373 aa).

The 136-residue stretch at 66–201 (CLISRLATTK…IGAFRTLPSK (136 aa)) folds into the MPN domain. Zn(2+)-binding residues include His-147, His-149, and Asp-160. The short motif at 147–160 (HSHPGYGCWLSNID) is the JAMM motif element. Residues 289 to 325 (FTHERSNSISSTSSLTTRHTTDVEMDDQESAQSSLDI) form a disordered region. The span at 295 to 306 (NSISSTSSLTTR) shows a compositional bias: low complexity.

The protein belongs to the peptidase M67A family. CSN5 subfamily. As to quaternary structure, component of the COP9 signalosome (CSN) complex.

The protein resides in the cytoplasm. The protein localises to the nucleus. Its function is as follows. Catalytic Component of the COP9 signalosome (CSN) complex that acts as an regulator of the ubiquitin (Ubl) conjugation pathway by mediating the deneddylation of the cullin subunit of SCF-type E3 ubiquitin-protein ligase complexes. The CNS complex is involved in the regulation of the mating pheromone response. This chain is COP9 signalosome complex subunit 5 (RRI1), found in Kluyveromyces lactis (strain ATCC 8585 / CBS 2359 / DSM 70799 / NBRC 1267 / NRRL Y-1140 / WM37) (Yeast).